The primary structure comprises 626 residues: Transketolase-like protein 2 (626 aa).

Residues Ser41, His78, and 124–126 (GSL) contribute to the thiamine diphosphate site. Mg(2+) is bound at residue Asp156. Gly157 and Asn186 together coordinate thiamine diphosphate. Residues Asn186 and Leu188 each contribute to the Mg(2+) site. Residues Lys248 and His262 each contribute to the thiamine diphosphate site. His262 and Ser349 together coordinate substrate. Glu370 and Phe396 together coordinate thiamine diphosphate. Catalysis depends on Glu370, which acts as the Proton donor. 2 residues coordinate substrate: His420 and Asp428. Gln432 serves as a coordination point for thiamine diphosphate.

This sequence belongs to the transketolase family. Homodimer. Mg(2+) is required as a cofactor. Ca(2+) serves as cofactor. It depends on Mn(2+) as a cofactor. The cofactor is Co(2+). Requires thiamine diphosphate as cofactor. As to expression, overexpressed in hepatoma cancer cells.

The catalysed reaction is D-sedoheptulose 7-phosphate + D-glyceraldehyde 3-phosphate = aldehydo-D-ribose 5-phosphate + D-xylulose 5-phosphate. Its function is as follows. Plays an essential role in total transketolase activity and cell proliferation in cancer cells; after transfection with anti-TKTL1 siRNA, total transketolase activity dramatically decreases and proliferation was significantly inhibited in cancer cells. Plays a pivotal role in carcinogenesis. The chain is Transketolase-like protein 2 (TKTL2) from Homo sapiens (Human).